A 643-amino-acid chain; its full sequence is Tigger transposable element-derived protein 5 (643 aa).

A disordered region spans residues 1–50 (MYSAGPPAVPAPRRCRRPPPGRPMQPPRPPAPAPVPAARPPPPAPGPRPR). The span at 20-48 (PGRPMQPPRPPAPAPVPAARPPPPAPGPR) shows a compositional bias: pro residues. An HTH psq-type domain is found at 52-103 (AVKMAFRKAYSIKDKLQAIERVKGGERQASVCRDFGVPGGTLRGWLKDEPKL). 2 consecutive DNA-binding regions (H-T-H motif) follow at residues 79–99 (QASVCRDFGVPGGTLRGWLKD) and 150–183 (PLIQAQAEAFARQIYGPECTFKASHGWFWRWQKR). The 74-residue stretch at 117–190 (QRKKMRLANE…QKRHGISSQR (74 aa)) folds into the HTH CENPB-type domain. Residues 197 to 236 (PVAAGPAPGPPVKQEPAQPTRAGPLPDRAASTPAPAEGGY) form a disordered region. The DDE-1 domain occupies 238–358 (DEQIYNANVT…LQQKAVLLVA (121 aa)). The disordered stretch occupies residues 366-395 (EARMPALEESEETRRRCRPEPTGPPEELQT).

It belongs to the tigger transposable element derived protein family.

The protein localises to the nucleus. The polypeptide is Tigger transposable element-derived protein 5 (TIGD5) (Bos taurus (Bovine)).